A 125-amino-acid polypeptide reads, in one-letter code: MRWQGSSRRKATGGKVITARGKRKFEMGRESAETRISEIKRKKVPTMGGNRKVRLLQSNVANVTNPKDGKTVTAPIETVIDNTANKHYVRRNILTKGSVIRTSMGTARVTSRPGQDGVVNAVLIE.

The protein belongs to the eukaryotic ribosomal protein eS8 family. Part of the 30S ribosomal subunit.

This Methanosarcina acetivorans (strain ATCC 35395 / DSM 2834 / JCM 12185 / C2A) protein is Small ribosomal subunit protein eS8.